The primary structure comprises 596 residues: Elongation factor 4 (596 aa).

The tr-type G domain maps to 2 to 183 (KNIRNFSIIA…AIVDRIPAPV (182 aa)). GTP-binding positions include 14 to 19 (DHGKST) and 130 to 133 (NKID).

This sequence belongs to the TRAFAC class translation factor GTPase superfamily. Classic translation factor GTPase family. LepA subfamily.

Its subcellular location is the cell inner membrane. The catalysed reaction is GTP + H2O = GDP + phosphate + H(+). Required for accurate and efficient protein synthesis under certain stress conditions. May act as a fidelity factor of the translation reaction, by catalyzing a one-codon backward translocation of tRNAs on improperly translocated ribosomes. Back-translocation proceeds from a post-translocation (POST) complex to a pre-translocation (PRE) complex, thus giving elongation factor G a second chance to translocate the tRNAs correctly. Binds to ribosomes in a GTP-dependent manner. This Sulfurimonas denitrificans (strain ATCC 33889 / DSM 1251) (Thiomicrospira denitrificans (strain ATCC 33889 / DSM 1251)) protein is Elongation factor 4.